The following is a 446-amino-acid chain: Phosphoglucosamine mutase (446 aa).

Catalysis depends on Ser-103, which acts as the Phosphoserine intermediate. Mg(2+) is bound by residues Ser-103, Asp-242, Asp-244, and Asp-246. A Phosphoserine modification is found at Ser-103.

This sequence belongs to the phosphohexose mutase family. It depends on Mg(2+) as a cofactor. In terms of processing, activated by phosphorylation.

It catalyses the reaction alpha-D-glucosamine 1-phosphate = D-glucosamine 6-phosphate. In terms of biological role, catalyzes the conversion of glucosamine-6-phosphate to glucosamine-1-phosphate. This chain is Phosphoglucosamine mutase, found in Vibrio campbellii (strain ATCC BAA-1116).